A 184-amino-acid chain; its full sequence is MSEKQINNFSLISRLFGNLFYRFPTDKVLADAFVWLQQEGLSQVWALDTDKESELALNSLQVKIDLNLLNEEYQKLFATNGKVMTAISAYGIDVEEFVNFRLVRNMPEVESADHFALLLLTASWLEDNSDSLVAQQEFFETFLLPCAAKFLTQVENQATLPFYRALALLTREILATMADELEEE.

Belongs to the TorD/DmsD family.

This is an uncharacterized protein from Haemophilus influenzae (strain ATCC 51907 / DSM 11121 / KW20 / Rd).